A 188-amino-acid polypeptide reads, in one-letter code: Trafficking protein particle complex subunit 5 (188 aa).

The protein belongs to the TRAPP small subunits family. BET3 subfamily. In terms of assembly, part of the multisubunit TRAPP (transport protein particle) complex.

Its subcellular location is the golgi apparatus. It localises to the cis-Golgi network. The protein localises to the endoplasmic reticulum. In terms of biological role, may play a role in vesicular transport from endoplasmic reticulum to Golgi. The chain is Trafficking protein particle complex subunit 5 (TRAPPC5) from Gallus gallus (Chicken).